Reading from the N-terminus, the 647-residue chain is Leishmanolysin-like peptidase (647 aa).

His264 provides a ligand contact to Zn(2+). Residue Glu265 is part of the active site. Zn(2+) is bound by residues His268 and His370.

The protein belongs to the peptidase M8 family. Zn(2+) serves as cofactor. As to expression, expressed in all cell lines analyzed.

The protein localises to the cytoplasm. The protein resides in the lipid droplet. In terms of biological role, metalloprotease. In Homo sapiens (Human), this protein is Leishmanolysin-like peptidase (LMLN).